The chain runs to 301 residues: Probable alpha-L-glutamate ligase (301 aa).

Residues 104 to 287 (LQLLSRRGIG…VAGIIIEHLE (184 aa)) enclose the ATP-grasp domain. ATP-binding positions include Lys-141, 178–179 (EY), Asp-187, and 211–213 (RSN). Asp-248, Glu-260, and Asn-262 together coordinate Mg(2+). Residues Asp-248, Glu-260, and Asn-262 each coordinate Mn(2+).

Belongs to the RimK family. It depends on Mg(2+) as a cofactor. Mn(2+) serves as cofactor.

The polypeptide is Probable alpha-L-glutamate ligase (Pseudomonas fluorescens (strain Pf0-1)).